The chain runs to 213 residues: Uridine kinase (213 aa).

15–22 (GASASGKS) provides a ligand contact to ATP.

It belongs to the uridine kinase family.

The protein localises to the cytoplasm. The enzyme catalyses uridine + ATP = UMP + ADP + H(+). It carries out the reaction cytidine + ATP = CMP + ADP + H(+). It participates in pyrimidine metabolism; CTP biosynthesis via salvage pathway; CTP from cytidine: step 1/3. Its pathway is pyrimidine metabolism; UMP biosynthesis via salvage pathway; UMP from uridine: step 1/1. This is Uridine kinase from Yersinia pseudotuberculosis serotype O:1b (strain IP 31758).